We begin with the raw amino-acid sequence, 226 residues long: Ribonuclease 3 (226 aa).

In terms of domain architecture, RNase III spans 4–127 (LEEFEKKLGY…VMGAIYLEKG (124 aa)). Mg(2+) is bound at residue Glu-40. Asp-44 is a catalytic residue. Mg(2+) contacts are provided by Asn-113 and Glu-116. Glu-116 is an active-site residue. The region spanning 154-223 (DFKTALQEFT…AKEALKILKA (70 aa)) is the DRBM domain.

It belongs to the ribonuclease III family. In terms of assembly, homodimer. Mg(2+) serves as cofactor.

The protein resides in the cytoplasm. It carries out the reaction Endonucleolytic cleavage to 5'-phosphomonoester.. Its function is as follows. Digests double-stranded RNA. Involved in the processing of primary rRNA transcript to yield the immediate precursors to the large and small rRNAs (23S and 16S). Processes some mRNAs, and tRNAs when they are encoded in the rRNA operon. Processes pre-crRNA and tracrRNA of type II CRISPR loci if present in the organism. This Nitratiruptor sp. (strain SB155-2) protein is Ribonuclease 3.